The following is a 375-amino-acid chain: MARGVILLAAGGTGGHLFPAEALAHELNGRGWTVHLATDDRAERFAGHFPAAAVHPIQSATMGSKNPIAVLGAFWKIWRGVRQASTIIGRIKPDAVVGFGGYPTLPPLYAATRRKVPTLIHEQNAVMGRANRALAGRVDAIAGGFLPQDTSAAGEKTVTTGNPVRPAVLEAAKTPYAASTGQEPFRLLVFGGSQGAQFFSDAMPGAIALLSDAQRKRLVITQQARADDVARVKTAYAALGVAVEVSPFFTDMAARMAAAHLVISRSGASTVSEIAVIGRPALLVPYPFALDHDQAANAAALAAAGGGEVHPQSTLSPERIAALIGGLMDNPERLAAMAAGAKSVGRPDAARLLADLTEAIASQKTVSDFKKGTQA.

UDP-N-acetyl-alpha-D-glucosamine-binding positions include 13 to 15 (TGG), Asn124, Arg165, Ser193, and Gln294.

The protein belongs to the glycosyltransferase 28 family. MurG subfamily.

It localises to the cell inner membrane. It carries out the reaction di-trans,octa-cis-undecaprenyl diphospho-N-acetyl-alpha-D-muramoyl-L-alanyl-D-glutamyl-meso-2,6-diaminopimeloyl-D-alanyl-D-alanine + UDP-N-acetyl-alpha-D-glucosamine = di-trans,octa-cis-undecaprenyl diphospho-[N-acetyl-alpha-D-glucosaminyl-(1-&gt;4)]-N-acetyl-alpha-D-muramoyl-L-alanyl-D-glutamyl-meso-2,6-diaminopimeloyl-D-alanyl-D-alanine + UDP + H(+). It functions in the pathway cell wall biogenesis; peptidoglycan biosynthesis. Its function is as follows. Cell wall formation. Catalyzes the transfer of a GlcNAc subunit on undecaprenyl-pyrophosphoryl-MurNAc-pentapeptide (lipid intermediate I) to form undecaprenyl-pyrophosphoryl-MurNAc-(pentapeptide)GlcNAc (lipid intermediate II). This chain is UDP-N-acetylglucosamine--N-acetylmuramyl-(pentapeptide) pyrophosphoryl-undecaprenol N-acetylglucosamine transferase, found in Mesorhizobium japonicum (strain LMG 29417 / CECT 9101 / MAFF 303099) (Mesorhizobium loti (strain MAFF 303099)).